The sequence spans 229 residues: MHSMEVGLVPAPAREPRLTRWLRRGSGILAHLIALGFTIFLTVLSRPGTSLFSWHPVFMALAFCLCMAEAILLFSPEHSLFFFCSRKTRIRLHWAGQTMAILCAVLGLGFIISSKIRSEMSHLVSWHSWIGALTLLATGGQALCGLCLLCPRAARVSRVARLKLYHLTCGLVVYLMATVTVLLGMYSVWFQAQIKGTAWYLCLGLPLYPALVIMHQISSSYLPRKKVEI.

Residues 1-24 are Cytoplasmic-facing; the sequence is MHSMEVGLVPAPAREPRLTRWLRR. The Cytochrome b561 domain maps to 22–224; the sequence is LRRGSGILAH…HQISSSYLPR (203 aa). Residues 25–45 traverse the membrane as a helical segment; that stretch reads GSGILAHLIALGFTIFLTVLS. The Lumenal portion of the chain corresponds to 46-53; it reads RPGTSLFS. Residues 54 to 74 traverse the membrane as a helical segment; that stretch reads WHPVFMALAFCLCMAEAILLF. A heme b-binding site is contributed by His55. Over 75-91 the chain is Cytoplasmic; sequence SPEHSLFFFCSRKTRIR. A helical transmembrane segment spans residues 92–112; sequence LHWAGQTMAILCAVLGLGFII. Heme b contacts are provided by His93 and His127. The Lumenal segment spans residues 113 to 128; sequence SSKIRSEMSHLVSWHS. Residues 129–149 traverse the membrane as a helical segment; sequence WIGALTLLATGGQALCGLCLL. Topologically, residues 150–169 are cytoplasmic; the sequence is CPRAARVSRVARLKLYHLTC. His166 is a binding site for heme b. The chain crosses the membrane as a helical span at residues 170 to 190; that stretch reads GLVVYLMATVTVLLGMYSVWF. The Lumenal segment spans residues 191 to 193; the sequence is QAQ. Residues 194–214 form a helical membrane-spanning segment; sequence IKGTAWYLCLGLPLYPALVIM. At 215-229 the chain is on the cytoplasmic side; the sequence is HQISSSYLPRKKVEI.

It depends on heme b as a cofactor.

The protein resides in the membrane. It carries out the reaction monodehydro-L-ascorbate radical(out) + L-ascorbate(in) = monodehydro-L-ascorbate radical(in) + L-ascorbate(out). The enzyme catalyses Fe(3+)(out) + L-ascorbate(in) = monodehydro-L-ascorbate radical(in) + Fe(2+)(out) + H(+). In terms of biological role, probable transmembrane reductase that may use ascorbate as an electron donor and transfer electrons across membranes to reduce monodehydro-L-ascorbate radical and iron cations Fe(3+) in another cellular compartment. This chain is Probable transmembrane reductase CYB561D1, found in Mus musculus (Mouse).